The primary structure comprises 100 residues: Integration host factor subunit alpha (100 aa).

Residues 53 to 72 (FQLRDKPQRPGRNPKTGEEV) form a disordered region.

It belongs to the bacterial histone-like protein family. In terms of assembly, heterodimer of an alpha and a beta chain.

Its function is as follows. This protein is one of the two subunits of integration host factor, a specific DNA-binding protein that functions in genetic recombination as well as in transcriptional and translational control. The polypeptide is Integration host factor subunit alpha (Neisseria gonorrhoeae (strain ATCC 700825 / FA 1090)).